A 379-amino-acid polypeptide reads, in one-letter code: Putative glutamate--cysteine ligase 2 (379 aa).

This sequence belongs to the glutamate--cysteine ligase type 2 family. YbdK subfamily.

The catalysed reaction is L-cysteine + L-glutamate + ATP = gamma-L-glutamyl-L-cysteine + ADP + phosphate + H(+). In terms of biological role, ATP-dependent carboxylate-amine ligase which exhibits weak glutamate--cysteine ligase activity. The polypeptide is Putative glutamate--cysteine ligase 2 (Roseiflexus sp. (strain RS-1)).